The primary structure comprises 167 residues: Zymogen granule membrane protein 16 (167 aa).

The first 16 residues, 1–16 (MLTVALLALLCASASG), serve as a signal peptide directing secretion. The Jacalin-type lectin domain occupies 24–159 (SSYSGEYGGG…IDAIGLHWDV (136 aa)).

The protein belongs to the jacalin lectin family. As to expression, highly expressed in liver. Detected at lower levels in colon, ileum and jejunum.

The protein localises to the secreted. It localises to the extracellular space. It is found in the extracellular matrix. The protein resides in the zymogen granule lumen. Its subcellular location is the golgi apparatus lumen. In terms of biological role, may play a role in protein trafficking. May act as a linker molecule between the submembranous matrix on the luminal side of zymogen granule membrane (ZGM) and aggregated secretory proteins during granule formation in the TGN. This Homo sapiens (Human) protein is Zymogen granule membrane protein 16 (ZG16).